Here is a 213-residue protein sequence, read N- to C-terminus: Kynurenine formamidase (213 aa).

Trp18 is a binding site for substrate. Positions 48, 52, and 54 each coordinate Zn(2+). His58 (proton donor/acceptor) is an active-site residue. The Zn(2+) site is built by His160 and Glu172.

This sequence belongs to the Cyclase 1 superfamily. KynB family. Homodimer. Requires Zn(2+) as cofactor.

The catalysed reaction is N-formyl-L-kynurenine + H2O = L-kynurenine + formate + H(+). It participates in amino-acid degradation; L-tryptophan degradation via kynurenine pathway; L-kynurenine from L-tryptophan: step 2/2. Functionally, catalyzes the hydrolysis of N-formyl-L-kynurenine to L-kynurenine, the second step in the kynurenine pathway of tryptophan degradation. The sequence is that of Kynurenine formamidase from Burkholderia pseudomallei (strain 1106a).